We begin with the raw amino-acid sequence, 119 residues long: Large ribosomal subunit protein bL20 (119 aa).

It belongs to the bacterial ribosomal protein bL20 family.

Functionally, binds directly to 23S ribosomal RNA and is necessary for the in vitro assembly process of the 50S ribosomal subunit. It is not involved in the protein synthesizing functions of that subunit. This Nitrobacter winogradskyi (strain ATCC 25391 / DSM 10237 / CIP 104748 / NCIMB 11846 / Nb-255) protein is Large ribosomal subunit protein bL20.